We begin with the raw amino-acid sequence, 417 residues long: Serine hydroxymethyltransferase (417 aa).

(6S)-5,6,7,8-tetrahydrofolate is bound by residues Leu-121 and 125-127 (GHL). Lys-229 carries the N6-(pyridoxal phosphate)lysine modification. 355–357 (SPF) lines the (6S)-5,6,7,8-tetrahydrofolate pocket.

Belongs to the SHMT family. In terms of assembly, homodimer. Pyridoxal 5'-phosphate is required as a cofactor.

It localises to the cytoplasm. The catalysed reaction is (6R)-5,10-methylene-5,6,7,8-tetrahydrofolate + glycine + H2O = (6S)-5,6,7,8-tetrahydrofolate + L-serine. It participates in one-carbon metabolism; tetrahydrofolate interconversion. It functions in the pathway amino-acid biosynthesis; glycine biosynthesis; glycine from L-serine: step 1/1. In terms of biological role, catalyzes the reversible interconversion of serine and glycine with tetrahydrofolate (THF) serving as the one-carbon carrier. This reaction serves as the major source of one-carbon groups required for the biosynthesis of purines, thymidylate, methionine, and other important biomolecules. Also exhibits THF-independent aldolase activity toward beta-hydroxyamino acids, producing glycine and aldehydes, via a retro-aldol mechanism. This is Serine hydroxymethyltransferase from Xanthomonas campestris pv. campestris (strain 8004).